The following is a 4151-amino-acid chain: Mycoketide-CoA synthase (4151 aa).

Residues 2 to 32 are a coiled coil; that stretch reads VDQLQHATEALRKALVQVERLKRTNRALLER. In terms of domain architecture, Ketosynthase family 3 (KS3) 1 spans 34–457; sequence SEPIAIVGMS…GTNAHVIIEA (424 aa). Module regions lie at residues 35 to 2038 and 2057 to 4070; these read EPIA…RTEL and DPIA…RREL. C203 functions as the Acyl-thioester intermediate; for beta-ketoacyl synthase 1 activity in the catalytic mechanism. Active-site for beta-ketoacyl synthase 1 activity residues include H338 and H379. The tract at residues 559-880 is acyltransferase 1; the sequence is VFVFPGQGSQ…AASAFVAGVA (322 aa). The Acyl-ester intermediate; for acyltransferase 1 activity role is filled by S650. Positions 926–1048 are N-terminal hotdog fold 1; that stretch reads HPLLGAVVDL…GILRPGSVEP (123 aa). The tract at residues 926 to 1194 is dehydratase 1; it reads HPLLGAVVDL…VARPVTERQL (269 aa). The PKS/mFAS DH 1 domain occupies 926-1195; that stretch reads HPLLGAVVDL…ARPVTERQLL (270 aa). The active-site Proton acceptor; for dehydratase activity 1 is H958. The segment at 1060-1195 is C-terminal hotdog fold 1; that stretch reads AVTVDVADGY…ARPVTERQLL (136 aa). D1120 acts as the Proton donor; for dehydratase activity 1 in catalysis. Positions 1366-1671 are enoyl reductase 1; the sequence is GTFENLRLEP…QARHTGKVVM (306 aa). The segment at 1680–1858 is beta-ketoacyl reductase 1; sequence GTVLITGGTG…AISLGWGLWD (179 aa). The active-site For beta-ketoacyl reductase 1 activity is Y1828. One can recognise a Carrier 1 domain in the interval 1963-2038; the sequence is AVLLGLVRLH…RLASYIRTEL (76 aa). An O-(pantetheine 4'-phosphoryl)serine modification is found at S1998. One can recognise a Ketosynthase family 3 (KS3) 2 domain in the interval 2056 to 2480; sequence EDPIAIVGMA…GTNAHVIIEA (425 aa). C2226 (acyl-thioester intermediate; for beta-ketoacyl synthase 2 activity) is an active-site residue. Catalysis depends on for beta-ketoacyl synthase 2 activity residues H2361 and H2402. The interval 2582 to 2893 is acyltransferase 2; that stretch reads VFVFPGQGSQ…AVAQGFVTGM (312 aa). S2672 functions as the Acyl-ester intermediate; for acyltransferase 2 activity in the catalytic mechanism. The N-terminal hotdog fold 2 stretch occupies residues 2940-3062; it reads HALLGAVIDL…GALRAGSAEP (123 aa). Positions 2940–3215 are dehydratase 2; it reads HALLGAVIDL…ARPVTDQQLR (276 aa). Positions 2940–3215 constitute a PKS/mFAS DH 2 domain; it reads HALLGAVIDL…ARPVTDQQLR (276 aa). The active-site Proton acceptor; for dehydratase activity 2 is the H2972. The C-terminal hotdog fold 2 stretch occupies residues 3074 to 3215; the sequence is AVPVEVADGY…ARPVTDQQLR (142 aa). D3135 functions as the Proton donor; for dehydratase activity 2 in the catalytic mechanism. An enoyl reductase 2 region spans residues 3395 to 3701; it reads GTFENLRLEL…QARHTGKVVM (307 aa). A beta-ketoacyl reductase 2 region spans residues 3710–3888; sequence GTVLITGGTG…AISLGWGLWD (179 aa). Y3858 serves as the catalytic For beta-ketoacyl reductase 2 activity. Residues 3995-4070 enclose the Carrier 2 domain; it reads AVLLDLVRSH…ALAGYMRREL (76 aa). S4030 bears the O-(pantetheine 4'-phosphoryl)serine mark.

As to quaternary structure, forms a large supramolecular assembly mediated through specific interactions between the N- and C-terminus linkers.

The enzyme catalyses a medium-chain fatty acyl-CoA + 5 (S)-methylmalonyl-CoA + 5 malonyl-CoA + 22 NADPH + 32 H(+) = a mycoketide-CoA + 10 CO2 + 22 NADP(+) + 10 CoA + 11 H2O. It functions in the pathway lipid metabolism; fatty acid metabolism. Functionally, involved in the synthesis of beta-D-mannosyl phosphomycoketide (MPM), an antigenic mycobacterial polyketide. Binds a fatty acyl-CoA as a starter unit, and extends it by five rounds of alternative additions of malonyl-CoA and methylmalonyl-CoA extender units. Depending on the starter unit, the enzyme forms mycoketide-CoAs of different lengths. Shows preference for small-/medium-chain starter fatty acyl substrates. Uses a hybrid modularly iterative mechanism, by forming a supramolecular assembly to perform repetitive cycles of iterations. In Mycobacterium tuberculosis (strain ATCC 25618 / H37Rv), this protein is Mycoketide-CoA synthase.